Reading from the N-terminus, the 356-residue chain is Pavine N-methyltransferase (356 aa).

8 residues coordinate S-adenosyl-L-homocysteine: phenylalanine 96, serine 97, glycine 135, asparagine 159, glutamine 163, aspartate 185, valine 186, and valine 201. 8 residues coordinate S-adenosyl-L-methionine: phenylalanine 96, serine 97, glycine 135, asparagine 159, glutamine 163, aspartate 185, valine 186, and valine 201. Glutamate 205 contacts (S)-tetrahydropapaverine. Cysteine 331 is a catalytic residue.

Belongs to the CFA/CMAS family. Homodimer.

The protein resides in the cytoplasm. The enzyme catalyses (+-)-pavine + S-adenosyl-L-methionine = N-methylpavine + S-adenosyl-L-homocysteine + H(+). The catalysed reaction is (S)-reticuline + S-adenosyl-L-methionine = (S)-tembetarine + S-adenosyl-L-homocysteine + H(+). It carries out the reaction (S)-stylopine + S-adenosyl-L-methionine = (S)-cis-N-methylstylopine + S-adenosyl-L-homocysteine. It catalyses the reaction (S)-scoulerine + S-adenosyl-L-methionine = (S)-cis-N-methylscoulerine + S-adenosyl-L-homocysteine. The enzyme catalyses (S)-tetrahydropapaverine + S-adenosyl-L-methionine = (S)-N-methyltetrahydropapaverine + S-adenosyl-L-homocysteine + H(+). The catalysed reaction is (S)-tetrahydropalmatine + S-adenosyl-L-methionine = (S)-cis-N-methyltetrahydropalmatine + S-adenosyl-L-homocysteine. It participates in alkaloid biosynthesis. Its activity is regulated as follows. In the presence of a racemic mixture of tetrahydropapaverine (THP), one molecule of (S)-THP binds in a productive mode, while one molecule of (R)-THP is bound next to it in a non-productive mode. The (R)-THP seems to inhibit the release of products from the enzyme when higher concentrations of the racemic substrate are added to the reaction. In terms of biological role, N-methyltransferase with a substrate preference for (+-)-pavine and (S)-reticuline, but also active with the protoberberines scoulerine and stylopine and, to a lesser extent, tetrahydropapaverine (THP) and tetrahydropalmatine. Is not active on (R)-reticuline, cryptopine, glaucine, codeine, canadaline, noscapine and berbamine. This Thalictrum flavum subsp. glaucum (Yellow meadow rue) protein is Pavine N-methyltransferase.